The primary structure comprises 296 residues: GTPase Era (296 aa).

An Era-type G domain is found at 7 to 174 (RTGFVAIVGR…LEEIAQRLPE (168 aa)). A G1 region spans residues 15 to 22 (GRPNVGKS). GTP is bound at residue 15–22 (GRPNVGKS). The interval 41-45 (QTTRH) is G2. The tract at residues 62-65 (DTPG) is G3. Residues 62–66 (DTPGF) and 123–126 (SKID) contribute to the GTP site. The segment at 123-126 (SKID) is G4. A G5 region spans residues 153–155 (VSA). A KH type-2 domain is found at 197 to 281 (VREKIFRLVG…HLEVYIKVRK (85 aa)).

The protein belongs to the TRAFAC class TrmE-Era-EngA-EngB-Septin-like GTPase superfamily. Era GTPase family. In terms of assembly, monomer.

The protein localises to the cytoplasm. It is found in the cell inner membrane. Its function is as follows. An essential GTPase that binds both GDP and GTP, with rapid nucleotide exchange. Plays a role in 16S rRNA processing and 30S ribosomal subunit biogenesis and possibly also in cell cycle regulation and energy metabolism. This Bordetella avium (strain 197N) protein is GTPase Era.